A 482-amino-acid polypeptide reads, in one-letter code: Catalase (482 aa).

Positions 1-23 (MSQNKTLTTASGPPVADNQNSRS) are enriched in polar residues. Positions 1–28 (MSQNKTLTTASGPPVADNQNSRSAGPRG) are disordered. Residues H55 and N128 contribute to the active site. Residue Y338 participates in heme binding. The interval 370-395 (SMAFGSNGGAAPNYEPNSYADAPKQA) is disordered.

It belongs to the catalase family. Requires heme as cofactor.

The enzyme catalyses 2 H2O2 = O2 + 2 H2O. Its function is as follows. Decomposes hydrogen peroxide into water and oxygen; serves to protect cells from the toxic effects of hydrogen peroxide. The chain is Catalase (cat) from Onchocerca volvulus endobacterium.